The chain runs to 945 residues: Isoleucine--tRNA ligase (945 aa).

The 'HIGH' region signature appears at 67–77; it reads PYANGQIHLGH. Glu-573 lines the L-isoleucyl-5'-AMP pocket. The short motif at 614–618 is the 'KMSKS' region element; that stretch reads KMSKS. Lys-617 lines the ATP pocket. The Zn(2+) site is built by Cys-908, Cys-911, Cys-928, and Cys-931.

This sequence belongs to the class-I aminoacyl-tRNA synthetase family. IleS type 1 subfamily. Monomer. Requires Zn(2+) as cofactor.

The protein resides in the cytoplasm. The catalysed reaction is tRNA(Ile) + L-isoleucine + ATP = L-isoleucyl-tRNA(Ile) + AMP + diphosphate. In terms of biological role, catalyzes the attachment of isoleucine to tRNA(Ile). As IleRS can inadvertently accommodate and process structurally similar amino acids such as valine, to avoid such errors it has two additional distinct tRNA(Ile)-dependent editing activities. One activity is designated as 'pretransfer' editing and involves the hydrolysis of activated Val-AMP. The other activity is designated 'posttransfer' editing and involves deacylation of mischarged Val-tRNA(Ile). The protein is Isoleucine--tRNA ligase of Acinetobacter baylyi (strain ATCC 33305 / BD413 / ADP1).